Reading from the N-terminus, the 354-residue chain is 4-hydroxy-3-methylbut-2-en-1-yl diphosphate synthase (flavodoxin) (354 aa).

The [4Fe-4S] cluster site is built by C263, C266, C298, and E305.

The protein belongs to the IspG family. Requires [4Fe-4S] cluster as cofactor.

It catalyses the reaction (2E)-4-hydroxy-3-methylbut-2-enyl diphosphate + oxidized [flavodoxin] + H2O + 2 H(+) = 2-C-methyl-D-erythritol 2,4-cyclic diphosphate + reduced [flavodoxin]. The protein operates within isoprenoid biosynthesis; isopentenyl diphosphate biosynthesis via DXP pathway; isopentenyl diphosphate from 1-deoxy-D-xylulose 5-phosphate: step 5/6. Converts 2C-methyl-D-erythritol 2,4-cyclodiphosphate (ME-2,4cPP) into 1-hydroxy-2-methyl-2-(E)-butenyl 4-diphosphate. This Fusobacterium nucleatum subsp. nucleatum (strain ATCC 25586 / DSM 15643 / BCRC 10681 / CIP 101130 / JCM 8532 / KCTC 2640 / LMG 13131 / VPI 4355) protein is 4-hydroxy-3-methylbut-2-en-1-yl diphosphate synthase (flavodoxin).